Consider the following 501-residue polypeptide: Cytochrome P450 90A4 (501 aa).

A helical transmembrane segment spans residues 2–22 (AAAALLLLAAAAAAVVVAMAL). Residue cysteine 446 coordinates heme.

It belongs to the cytochrome P450 family. The cofactor is heme.

Its subcellular location is the membrane. The protein operates within plant hormone biosynthesis; brassinosteroid biosynthesis. Its function is as follows. Catalyzes the C23-alpha-hydroxylation step in brassinosteroid biosynthesis. Converts 6-deoxocathasterone to 6-deoxoteasterone in the late C6-oxidation pathway and cathasterone to teasterone (TE) in the early C6-oxidation pathway of brassinolide (BL) biosynthesis. In Oryza sativa subsp. indica (Rice), this protein is Cytochrome P450 90A4.